Consider the following 341-residue polypeptide: Acetylpolyamine amidohydrolase (341 aa).

The active-site Proton donor/acceptor is His157. Zn(2+)-binding residues include Asp192, His194, and Asp281.

It belongs to the histone deacetylase family. In terms of assembly, homodimer. Zn(2+) serves as cofactor.

The enzyme catalyses N-acetylputrescine + H2O = putrescine + acetate. It carries out the reaction N-acetylcadaverine + H2O = cadaverine + acetate. Its pathway is amine and polyamine metabolism. In terms of biological role, involved in polyamine metabolism. Catalyzes the deacetylation of various acetylated polyamines such as N-acetylputrescine and N-acetylcadaverine. The protein is Acetylpolyamine amidohydrolase of Burkholderia pseudomallei (strain 1710b).